Reading from the N-terminus, the 479-residue chain is Shugoshin (479 aa).

A coiled-coil region spans residues 36 to 76 (SLRIRSLESEVSNLLSENVSLREQIITLTQELERFEAARTL). Disordered regions lie at residues 109–145 (SRAV…GFLD), 220–247 (EHSL…QADT), and 263–479 (AKRK…SMPP). Positions 123 to 132 (QSRESGPKEV) are enriched in basic and acidic residues. Acidic residues predominate over residues 270-286 (EDDESLFESSPSEDDEF). 2 stretches are compositionally biased toward polar residues: residues 290 to 303 (RPAQ…QNEH) and 318 to 328 (QSPTLSSQNDH). Basic and acidic residues-rich tracts occupy residues 335–352 (PQSE…RVLE) and 379–388 (GYNEKSEKPL). Over residues 400 to 411 (KNASPKKSSTRT) the composition is skewed to polar residues.

It belongs to the shugoshin family.

It localises to the nucleus. It is found in the chromosome. The protein localises to the centromere. Plays a central role in chromosome cohesion during cell division by preventing premature dissociation of cohesin complex from centromeres after prophase, when most of cohesin complex dissociates from chromosomes arms. This chain is Shugoshin (sgo1), found in Emericella nidulans (strain FGSC A4 / ATCC 38163 / CBS 112.46 / NRRL 194 / M139) (Aspergillus nidulans).